The following is a 132-amino-acid chain: MTMTDPIADMLSRVRNANNAHHDAVSMPSSKLKANIAEILKSEGYIADYKVEDAKVGKTLTLDLKYGPNRQRSIEGVRRVSKPGLRVYAKSTNLPQVLGGLGVAIISTSHGLLTDRQATEKGVGGEVLAYVW.

Belongs to the universal ribosomal protein uS8 family. As to quaternary structure, part of the 30S ribosomal subunit. Contacts proteins S5 and S12.

In terms of biological role, one of the primary rRNA binding proteins, it binds directly to 16S rRNA central domain where it helps coordinate assembly of the platform of the 30S subunit. The polypeptide is Small ribosomal subunit protein uS8 (Corynebacterium diphtheriae (strain ATCC 700971 / NCTC 13129 / Biotype gravis)).